The chain runs to 209 residues: Large ribosomal subunit protein uL4 (209 aa).

A disordered region spans residues 45–78 (RQGTHKAKERAEVAGSTRKIKKQKGTGTARAGSA).

The protein belongs to the universal ribosomal protein uL4 family. Part of the 50S ribosomal subunit.

Functionally, one of the primary rRNA binding proteins, this protein initially binds near the 5'-end of the 23S rRNA. It is important during the early stages of 50S assembly. It makes multiple contacts with different domains of the 23S rRNA in the assembled 50S subunit and ribosome. Forms part of the polypeptide exit tunnel. In Flavobacterium psychrophilum (strain ATCC 49511 / DSM 21280 / CIP 103535 / JIP02/86), this protein is Large ribosomal subunit protein uL4.